Reading from the N-terminus, the 408-residue chain is Histone acetyltransferase type B subunit 2 (408 aa).

5 WD repeats span residues 120–160 (KHEQ…KDHG), 167–207 (YHKE…NKSP), 213–253 (VHTD…AIQK), 255–295 (SVSS…KPLH), and 299–339 (GHED…AEQQ). The interval 341–345 (DDAYD) is interaction with the histone H4 N-terminus. Residues 356 to 396 (GHRSPVNEFSHNSNVPWLMCSVEEENVLQIWKPANKIVRPP) form a WD 6 repeat.

The protein belongs to the WD repeat RBAP46/RBAP48/MSI1 family. In terms of assembly, component of the HAT-B complex composed of at least HAT1 and HAT2. The HAT-B complex binds to histone H4 tail.

It is found in the cytoplasm. The protein resides in the nucleus. Its function is as follows. Regulatory subunit of the histone acetylase B (HAT-B) complex. The complex acetylates 'Lys-12' of histone H4 which is required for telomeric silencing. In Kluyveromyces lactis (strain ATCC 8585 / CBS 2359 / DSM 70799 / NBRC 1267 / NRRL Y-1140 / WM37) (Yeast), this protein is Histone acetyltransferase type B subunit 2 (HAT2).